A 599-amino-acid chain; its full sequence is Putative clathrin assembly protein At1g03050 (599 aa).

The 137-residue stretch at 26-162 (GRSASLSELD…DFRMQARHGK (137 aa)) folds into the ENTH domain. Disordered regions lie at residues 332 to 382 (KQSK…PEEE) and 580 to 599 (QGHM…TPQY). Composition is skewed to acidic residues over residues 341–359 (ADED…EQED) and 373–382 (EEDDVKPEEE). Residues 585–599 (LRQNQNQPYSYTPQY) show a composition bias toward polar residues.

Its subcellular location is the membrane. The protein localises to the clathrin-coated pit. It is found in the golgi apparatus. It localises to the cytoplasmic vesicle. The protein resides in the clathrin-coated vesicle. In Arabidopsis thaliana (Mouse-ear cress), this protein is Putative clathrin assembly protein At1g03050.